We begin with the raw amino-acid sequence, 183 residues long: Ribosome maturation factor RimM (183 aa).

One can recognise a PRC barrel domain in the interval 104-183 (EGDYYWKDLM…TIEVDWDPGF (80 aa)).

Belongs to the RimM family. Binds ribosomal protein uS19.

Its subcellular location is the cytoplasm. Functionally, an accessory protein needed during the final step in the assembly of 30S ribosomal subunit, possibly for assembly of the head region. Essential for efficient processing of 16S rRNA. May be needed both before and after RbfA during the maturation of 16S rRNA. It has affinity for free ribosomal 30S subunits but not for 70S ribosomes. The protein is Ribosome maturation factor RimM of Salmonella arizonae (strain ATCC BAA-731 / CDC346-86 / RSK2980).